The chain runs to 898 residues: Neutral alpha-glucosidase C (898 aa).

The interval 154–173 is disordered; it reads QRATKGNGQNTPAATSQENQ. A compositionally biased stretch (polar residues) spans 157 to 171; it reads TKGNGQNTPAATSQE. Asp-495 functions as the Nucleophile in the catalytic mechanism. Glu-498 is a catalytic residue. The Proton donor role is filled by Asp-571.

The protein belongs to the glycosyl hydrolase 31 family.

The catalysed reaction is Hydrolysis of terminal, non-reducing (1-&gt;4)-linked alpha-D-glucose residues with release of alpha-D-glucose.. Its function is as follows. Has alpha-glucosidase activity. This chain is Neutral alpha-glucosidase C (Ganc), found in Mus musculus (Mouse).